The primary structure comprises 358 residues: Ion-translocating oxidoreductase complex subunit D (358 aa).

A run of 3 helical transmembrane segments spans residues 24–44 (ILAM…GVVL), 79–99 (LTAL…IIII), and 125–145 (IGYV…MPPI). Residue Thr186 is modified to FMN phosphoryl threonine. 5 helical membrane-spanning segments follow: residues 220–240 (FAQG…FLIL), 248–268 (IPVA…FTGF), 271–291 (LSAI…FIAT), 297–317 (SITP…VYLI), and 321–341 (GNYP…VPLI).

It belongs to the NqrB/RnfD family. In terms of assembly, the complex is composed of six subunits: RnfA, RnfB, RnfC, RnfD, RnfE and RnfG. It depends on FMN as a cofactor.

The protein resides in the cell inner membrane. Its function is as follows. Part of a membrane-bound complex that couples electron transfer with translocation of ions across the membrane. This chain is Ion-translocating oxidoreductase complex subunit D, found in Haemophilus influenzae (strain ATCC 51907 / DSM 11121 / KW20 / Rd).